Reading from the N-terminus, the 446-residue chain is Chromosomal replication initiator protein DnaA (446 aa).

The domain I, interacts with DnaA modulators stretch occupies residues 1–81; it reads MENISDLWNS…AKLAIRFIIP (81 aa). The tract at residues 81–109 is domain II; that stretch reads PQSQAEEDIDLPPVKRNPAQDDSAHLPQS. A domain III, AAA+ region region spans residues 110 to 326; the sequence is MLNPKYTFDT…GALIRVVAYS (217 aa). Residues G154, G156, K157, and T158 each contribute to the ATP site. Positions 327 to 446 are domain IV, binds dsDNA; the sequence is SLINKDINAD…QVEEINGILK (120 aa).

It belongs to the DnaA family. Oligomerizes as a right-handed, spiral filament on DNA at oriC.

It localises to the cytoplasm. In terms of biological role, plays an essential role in the initiation and regulation of chromosomal replication. ATP-DnaA binds to the origin of replication (oriC) to initiate formation of the DNA replication initiation complex once per cell cycle. Binds the DnaA box (a 9 base pair repeat at the origin) and separates the double-stranded (ds)DNA. Forms a right-handed helical filament on oriC DNA; dsDNA binds to the exterior of the filament while single-stranded (ss)DNA is stabiized in the filament's interior. The ATP-DnaA-oriC complex binds and stabilizes one strand of the AT-rich DNA unwinding element (DUE), permitting loading of DNA polymerase. After initiation quickly degrades to an ADP-DnaA complex that is not apt for DNA replication. Binds acidic phospholipids. In Bacillus cereus (strain G9842), this protein is Chromosomal replication initiator protein DnaA.